Reading from the N-terminus, the 759-residue chain is MKPLKLELNPRDFNHYQAAFLPYRMKIKQPLHVLCFSVCSLSAVAQETCPAPANTFVVEKRLPNGQIQVISNMTSIQQDNFAEFEGDVEITNKDSQIIANKAQIDRTTQQLIATGDVSYQNPQLSVTSQKVLLNTQNNRMEIADTQYELTTLNARGQAELLVVDQTQGLELNGVTFSTCPTGQEDWLVHADSITVKPDETRGVARNAFFYVQDIPIFYLPYYSFPVTDARETGLLFPQVGSSSSTGFAYEQPYYLNLDPQYDATITPRYMTKRGLQLKTEFRYLTENNSGQIDIEYLPNDSDSTTNEDRYFYRFTHKGALSDDWEVNVDFNGLSDDNYIVDLGSDYYNSADTHLFRTLGLHYYSDALNVSLQLRDFEILGDHDDTYRALPELKLDYVTDLPAGFKFDIHSELARFDNANGTSPKATRAHIAPTLSLPLENSWGEFLAETSIMHTVYRQEDIEGTDLSRDVSRTLGQAKLYGALVFERQAHWFGDNVTQTLEPRAQYLYTSYEDQSDIGLYDTTRLFNDFAGLFRGQEFTGLDRISDKNQVTLGVTSRIIDEDNREQFKLSLGQIFYLEDNKVTAASKEDDRSALAAELDWRIGSKWLAHSEVQVSTQTDKVERSSVGLEYRLARDKMLQINHRFVRDLSGEQISQLGLTASWPIAQDWYWVGRWYRDIDRHRTIESYTGLQYESCCWALRIVAQRQLTSRFDDDGLQSTDEFDSGIAIQFLFKGIGGDSSGRDMLRDGLFGYRQPYLLD.

The first 45 residues, 1-45 (MKPLKLELNPRDFNHYQAAFLPYRMKIKQPLHVLCFSVCSLSAVA), serve as a signal peptide directing secretion.

It belongs to the LptD family. In terms of assembly, component of the lipopolysaccharide transport and assembly complex. Interacts with LptE and LptA.

It is found in the cell outer membrane. Together with LptE, is involved in the assembly of lipopolysaccharide (LPS) at the surface of the outer membrane. In Pseudoalteromonas atlantica (strain T6c / ATCC BAA-1087), this protein is LPS-assembly protein LptD.